Consider the following 164-residue polypeptide: FMN reductase (NADH) RutF (164 aa).

It belongs to the non-flavoprotein flavin reductase family. RutF subfamily.

The catalysed reaction is FMNH2 + NAD(+) = FMN + NADH + 2 H(+). Its function is as follows. Catalyzes the reduction of FMN to FMNH2 which is used to reduce pyrimidine by RutA via the Rut pathway. This Escherichia coli O45:K1 (strain S88 / ExPEC) protein is FMN reductase (NADH) RutF.